Here is a 441-residue protein sequence, read N- to C-terminus: Signal recognition particle 54 kDa protein (441 aa).

GTP-binding positions include 103–110 (GVQGSGKT), 184–188 (DTAGR), and 244–247 (TKMD).

It belongs to the GTP-binding SRP family. SRP54 subfamily. Part of the signal recognition particle protein translocation system, which is composed of SRP and FtsY. Archaeal SRP consists of a 7S RNA molecule of 300 nucleotides and two protein subunits: SRP54 and SRP19.

It is found in the cytoplasm. It catalyses the reaction GTP + H2O = GDP + phosphate + H(+). Involved in targeting and insertion of nascent membrane proteins into the cytoplasmic membrane. Binds to the hydrophobic signal sequence of the ribosome-nascent chain (RNC) as it emerges from the ribosomes. The SRP-RNC complex is then targeted to the cytoplasmic membrane where it interacts with the SRP receptor FtsY. The polypeptide is Signal recognition particle 54 kDa protein (Aeropyrum pernix (strain ATCC 700893 / DSM 11879 / JCM 9820 / NBRC 100138 / K1)).